A 500-amino-acid chain; its full sequence is Cytochrome P450 2D26 (500 aa).

Position 249 is a phosphoserine (S249). C446 contributes to the heme binding site.

Belongs to the cytochrome P450 family. Requires heme as cofactor.

The protein localises to the endoplasmic reticulum membrane. Its subcellular location is the microsome membrane. It catalyses the reaction an organic molecule + reduced [NADPH--hemoprotein reductase] + O2 = an alcohol + oxidized [NADPH--hemoprotein reductase] + H2O + H(+). In terms of biological role, cytochromes P450 are a group of heme-thiolate monooxygenases. In liver microsomes, this enzyme is involved in an NADPH-dependent electron transport pathway. It oxidizes a variety of structurally unrelated compounds, including steroids, fatty acids, and xenobiotics. The sequence is that of Cytochrome P450 2D26 from Mus musculus (Mouse).